The following is a 358-amino-acid chain: Alanine racemase (358 aa).

Lys35 serves as the catalytic Proton acceptor; specific for D-alanine. Lys35 is subject to N6-(pyridoxal phosphate)lysine. Residue Arg130 participates in substrate binding. The active-site Proton acceptor; specific for L-alanine is the Tyr255. A substrate-binding site is contributed by Met303.

It belongs to the alanine racemase family. It depends on pyridoxal 5'-phosphate as a cofactor.

The catalysed reaction is L-alanine = D-alanine. The protein operates within amino-acid biosynthesis; D-alanine biosynthesis; D-alanine from L-alanine: step 1/1. Catalyzes the interconversion of L-alanine and D-alanine. May also act on other amino acids. The polypeptide is Alanine racemase (alr) (Shewanella sp. (strain ANA-3)).